We begin with the raw amino-acid sequence, 186 residues long: Ribosome-recycling factor (186 aa).

Belongs to the RRF family.

The protein localises to the cytoplasm. Responsible for the release of ribosomes from messenger RNA at the termination of protein biosynthesis. May increase the efficiency of translation by recycling ribosomes from one round of translation to another. The sequence is that of Ribosome-recycling factor from Albidiferax ferrireducens (strain ATCC BAA-621 / DSM 15236 / T118) (Rhodoferax ferrireducens).